The sequence spans 26 residues: uncharacterized protein (26 aa).

Post-translationally, phosphorylated by YfhK.

In terms of biological role, probable member of a two-component regulatory system YfhA/YfhK. This is an uncharacterized protein from Klebsiella oxytoca.